Here is a 196-residue protein sequence, read N- to C-terminus: GTP cyclohydrolase-2 (196 aa).

49 to 53 is a binding site for GTP; sequence RVHSE. Zn(2+) contacts are provided by cysteine 54, cysteine 65, and cysteine 67. Residues glutamine 70, 92–94, and threonine 114 contribute to the GTP site; that span reads EGR. Aspartate 126 (proton acceptor) is an active-site residue. Arginine 128 functions as the Nucleophile in the catalytic mechanism. Residues threonine 149 and lysine 154 each contribute to the GTP site.

Belongs to the GTP cyclohydrolase II family. In terms of assembly, homodimer. Zn(2+) serves as cofactor.

The enzyme catalyses GTP + 4 H2O = 2,5-diamino-6-hydroxy-4-(5-phosphoribosylamino)-pyrimidine + formate + 2 phosphate + 3 H(+). Its pathway is cofactor biosynthesis; riboflavin biosynthesis; 5-amino-6-(D-ribitylamino)uracil from GTP: step 1/4. Catalyzes the conversion of GTP to 2,5-diamino-6-ribosylamino-4(3H)-pyrimidinone 5'-phosphate (DARP), formate and pyrophosphate. The sequence is that of GTP cyclohydrolase-2 from Yersinia pestis.